Consider the following 177-residue polypeptide: Acireductone dioxygenase (177 aa).

Fe(2+)-binding residues include H99, H101, E105, and H143. Ni(2+) contacts are provided by H99, H101, E105, and H143.

This sequence belongs to the acireductone dioxygenase (ARD) family. Monomer. The cofactor is Fe(2+). It depends on Ni(2+) as a cofactor.

It catalyses the reaction 1,2-dihydroxy-5-(methylsulfanyl)pent-1-en-3-one + O2 = 3-(methylsulfanyl)propanoate + CO + formate + 2 H(+). The catalysed reaction is 1,2-dihydroxy-5-(methylsulfanyl)pent-1-en-3-one + O2 = 4-methylsulfanyl-2-oxobutanoate + formate + 2 H(+). Its pathway is amino-acid biosynthesis; L-methionine biosynthesis via salvage pathway; L-methionine from S-methyl-5-thio-alpha-D-ribose 1-phosphate: step 5/6. Functionally, catalyzes 2 different reactions between oxygen and the acireductone 1,2-dihydroxy-3-keto-5-methylthiopentene (DHK-MTPene) depending upon the metal bound in the active site. Fe-containing acireductone dioxygenase (Fe-ARD) produces formate and 2-keto-4-methylthiobutyrate (KMTB), the alpha-ketoacid precursor of methionine in the methionine recycle pathway. Ni-containing acireductone dioxygenase (Ni-ARD) produces methylthiopropionate, carbon monoxide and formate, and does not lie on the methionine recycle pathway. This is Acireductone dioxygenase from Leptospira interrogans serogroup Icterohaemorrhagiae serovar copenhageni (strain Fiocruz L1-130).